A 602-amino-acid chain; its full sequence is Glutathione-regulated potassium-efflux system protein KefB (602 aa).

The next 13 membrane-spanning stretches (helical) occupy residues 4–24 (TGLL…VPIA), 29–49 (IGAV…GLGF), 55–75 (EILH…GLEL), 87–107 (IFGV…ALLY), 115–135 (AAVI…LQLM), 152–172 (VLLF…ILAG), 181–201 (VKIG…RYLL), 207–227 (YIVA…VVLG), 230–250 (LFMD…GILL), 261–281 (IAIE…VGMA), 296–318 (LGVL…VFGL), 326–346 (FAGV…AAFS), and 356–376 (ALLL…MQVI). The 120-residue stretch at 400–519 (DPQVIIVGFG…NGVKDFTRET (120 aa)) folds into the RCK N-terminal domain.

This sequence belongs to the monovalent cation:proton antiporter 2 (CPA2) transporter (TC 2.A.37) family. KefB subfamily. As to quaternary structure, interacts with the regulatory subunit KefG.

It is found in the cell inner membrane. Functionally, pore-forming subunit of a potassium efflux system that confers protection against electrophiles. Catalyzes K(+)/H(+) antiport. In Yersinia pestis bv. Antiqua (strain Antiqua), this protein is Glutathione-regulated potassium-efflux system protein KefB.